We begin with the raw amino-acid sequence, 245 residues long: Orotidine 5'-phosphate decarboxylase (245 aa).

Residues Asp22, Lys44, 71–80, Thr131, Arg192, Gln201, Gly221, and Arg222 contribute to the substrate site; that span reads DLKFHDIPNT. Lys73 serves as the catalytic Proton donor.

Belongs to the OMP decarboxylase family. Type 1 subfamily. As to quaternary structure, homodimer.

It catalyses the reaction orotidine 5'-phosphate + H(+) = UMP + CO2. The protein operates within pyrimidine metabolism; UMP biosynthesis via de novo pathway; UMP from orotate: step 2/2. Catalyzes the decarboxylation of orotidine 5'-monophosphate (OMP) to uridine 5'-monophosphate (UMP). This Escherichia coli O81 (strain ED1a) protein is Orotidine 5'-phosphate decarboxylase.